Reading from the N-terminus, the 200-residue chain is Cytochrome c biogenesis ATP-binding export protein CcmA (200 aa).

The region spanning 2–200 (LDVIELDFDY…NKADYEEYHL (199 aa)) is the ABC transporter domain. 34–41 (GSNGAGKT) contributes to the ATP binding site.

This sequence belongs to the ABC transporter superfamily. CcmA exporter (TC 3.A.1.107) family. The complex is composed of two ATP-binding proteins (CcmA) and two transmembrane proteins (CcmB).

The protein localises to the cell inner membrane. It catalyses the reaction heme b(in) + ATP + H2O = heme b(out) + ADP + phosphate + H(+). Its function is as follows. Part of the ABC transporter complex CcmAB involved in the biogenesis of c-type cytochromes; once thought to export heme, this seems not to be the case, but its exact role is uncertain. Responsible for energy coupling to the transport system. In Legionella pneumophila (strain Paris), this protein is Cytochrome c biogenesis ATP-binding export protein CcmA.